A 274-amino-acid chain; its full sequence is Protein CURLY FLAG LEAF 1 (274 aa).

The disordered stretch occupies residues serine 17–glutamate 44. The EAR signature appears at threonine 47–serine 52. Positions valine 54–serine 88 constitute a WW domain. Disordered stretches follow at residues threonine 83 to threonine 133 and glycine 175 to aspartate 216. Low complexity-rich tracts occupy residues arginine 87–arginine 106, alanine 121–threonine 133, and serine 184–serine 207.

Binds to HDG1.

In terms of biological role, negatively regulates the cuticle development probably by interacting with the HD-ZIP IV transcription factor HDG1. This is Protein CURLY FLAG LEAF 1 from Oryza sativa subsp. japonica (Rice).